We begin with the raw amino-acid sequence, 1465 residues long: DNA polymerase III PolC-type (1465 aa).

Positions 427-583 (YVVFDVETTG…YDAEATGRLL (157 aa)) constitute an Exonuclease domain.

This sequence belongs to the DNA polymerase type-C family. PolC subfamily.

The protein localises to the cytoplasm. It catalyses the reaction DNA(n) + a 2'-deoxyribonucleoside 5'-triphosphate = DNA(n+1) + diphosphate. Functionally, required for replicative DNA synthesis. This DNA polymerase also exhibits 3' to 5' exonuclease activity. This Streptococcus pyogenes serotype M4 (strain MGAS10750) protein is DNA polymerase III PolC-type.